Consider the following 136-residue polypeptide: Phosphoribosyl-AMP cyclohydrolase (136 aa).

Position 89 (D89) interacts with Mg(2+). C90 contributes to the Zn(2+) binding site. Residues D91 and D93 each coordinate Mg(2+). 2 residues coordinate Zn(2+): C106 and C113.

It belongs to the PRA-CH family. As to quaternary structure, homodimer. The cofactor is Mg(2+). Requires Zn(2+) as cofactor.

It localises to the cytoplasm. It catalyses the reaction 1-(5-phospho-beta-D-ribosyl)-5'-AMP + H2O = 1-(5-phospho-beta-D-ribosyl)-5-[(5-phospho-beta-D-ribosylamino)methylideneamino]imidazole-4-carboxamide. The protein operates within amino-acid biosynthesis; L-histidine biosynthesis; L-histidine from 5-phospho-alpha-D-ribose 1-diphosphate: step 3/9. Its function is as follows. Catalyzes the hydrolysis of the adenine ring of phosphoribosyl-AMP. This Bifidobacterium longum subsp. infantis (strain ATCC 15697 / DSM 20088 / JCM 1222 / NCTC 11817 / S12) protein is Phosphoribosyl-AMP cyclohydrolase.